The chain runs to 183 residues: Large ribosomal subunit protein eL18 (183 aa).

Positions 151–183 (HFGPAPGAPRSHTKPYVRSKGHEQAKPSRRSNV) are disordered.

Belongs to the eukaryotic ribosomal protein eL18 family.

The protein resides in the cytoplasm. This is Large ribosomal subunit protein eL18 (RpL18) from Plutella xylostella (Diamondback moth).